The sequence spans 168 residues: DNA-binding protein inhibitor ID-1 (168 aa).

Residues 46–98 (LPALLDEQQVNVLLYDMNGCYSRLKELVPTLPQNRKVSKVEILQHVIDYIRDL) form the bHLH domain. An interaction with IFI204 region spans residues 53-106 (QQVNVLLYDMNGCYSRLKELVPTLPQNRKVSKVEILQHVIDYIRDLQLELNSES). A Nuclear export signal motif is present at residues 91–104 (VIDYIRDLQLELNS).

As to quaternary structure, heterodimer with other HLH proteins. Interacts with CLOCK and BMAL1. Interacts with COPS5, IFI204, GATA4 and NKX2-5. In terms of processing, polyubiquitinated; which is favored by Ifi204 and leads to proteasomal degradation.

The protein resides in the cytoplasm. The protein localises to the nucleus. In terms of biological role, transcriptional regulator (lacking a basic DNA binding domain) which negatively regulates the basic helix-loop-helix (bHLH) transcription factors by forming heterodimers and inhibiting their DNA binding and transcriptional activity. Implicated in regulating a variety of cellular processes, including cellular growth, senescence, differentiation, apoptosis, angiogenesis, and neoplastic transformation. Inhibits skeletal muscle and cardiac myocyte differentiation. Regulates the circadian clock by repressing the transcriptional activator activity of the CLOCK-BMAL1 heterodimer. The sequence is that of DNA-binding protein inhibitor ID-1 (Id1) from Mus musculus (Mouse).